We begin with the raw amino-acid sequence, 80 residues long: DNA-binding protein S1FA2 (80 aa).

Positions 54–59 (PPRKKK) match the Nuclear localization signal motif. Over residues 55–70 (PRKKKPVSKKKMKREK) the composition is skewed to basic residues. The tract at residues 55–80 (PRKKKPVSKKKMKREKLKQGVSAPGE) is disordered.

This sequence belongs to the S1FA transcription factor family.

It localises to the nucleus. DNA-binding protein that specifically recognizes a negative element (S1F) within the RPS1 promoter. In Oryza sativa subsp. japonica (Rice), this protein is DNA-binding protein S1FA2 (S1FA2).